The following is a 210-amino-acid chain: Outer surface protein C (210 aa).

Positions 1–18 (MKKNTLSAILMTLFLFIS) are cleaved as a signal peptide. Cys19 is lipidated: N-palmitoyl cysteine. Residue Cys19 is the site of S-diacylglycerol cysteine attachment.

The protein belongs to the OspC lipoprotein family. Homodimer. Binds human plasminogen on the bacterial surface, also binds human plasmin. Interacts with tick I.ricinus salivary protein Iric-1. Interacts with human complement C4 beta chain (C4B); whole bacteria bind to wells coated with C4b. Binding is inhibited by human complement factor C2.

It localises to the cell outer membrane. It is found in the cell surface. Functionally, a major immunodominant protein in mammalian hosts. Required for the initial stages of mammalian infection. Interaction with tick I.ricinus salivary protein Salp15 protects the bacteria from antibody-mediated killing in vitro and in vivo. Inhibits macrophage-mediated phagocytosis of the bacteria. Binds human plasminogen; this probably confers an extracellular protease activity on the bacteria that allows it to traverse tissue. Binds human complement C4-B, which may inhibit the complement cascade. Experiments in mice suggest it may play another role after initial infection. The protein is Outer surface protein C of Borreliella burgdorferi (strain ATCC 35210 / DSM 4680 / CIP 102532 / B31) (Borrelia burgdorferi).